A 1021-amino-acid chain; its full sequence is Sodium/potassium-transporting ATPase subunit alpha-1 (1021 aa).

A propeptide spanning residues 1–5 (MGKGV) is cleaved from the precursor. The segment covering 1 to 11 (MGKGVGRDKYE) has biased composition (basic and acidic residues). Positions 1 to 36 (MGKGVGRDKYEPAAVSEHGDKKKAKKERDMDELKKE) are disordered. The Cytoplasmic portion of the chain corresponds to 4–85 (GVGRDKYEPA…NALTPPPTTP (82 aa)). Lysine 9 carries the post-translational modification N6-acetyllysine. Position 10 is a phosphotyrosine (tyrosine 10). At serine 16 the chain carries Phosphoserine; by PKC. Lysine 21 bears the N6-acetyllysine mark. A compositionally biased stretch (basic and acidic residues) spans 26–36 (KERDMDELKKE). Serine 38 and serine 45 each carry phosphoserine. Positions 80–82 (PPP) are phosphoinositide-3 kinase binding. Residues 86–106 (EWVKFCRQLFGGFSMLLWIGA) traverse the membrane as a helical segment. Over 107 to 129 (ILCFLAYGIQAATEEEPQNDNLY) the chain is Extracellular. A helical transmembrane segment spans residues 130–150 (LGVVLSAVVIITGCFSYYQEA). Residues 151–286 (KSSKIMESFK…GGQTPIAAEI (136 aa)) lie on the Cytoplasmic side of the membrane. Residues 214–233 (SSLTGESEPQTRSPDFTNEN) form a disordered region. Serine 226 bears the Phosphoserine mark. Phosphotyrosine is present on tyrosine 258. A helical transmembrane segment spans residues 287–306 (EHFIHIITGVAVFLGVSFFI). Over 307-318 (LSLILEYTWLEA) the chain is Extracellular. A helical membrane pass occupies residues 319–336 (VIFLIGIIVANVPEGLLA). The Cytoplasmic portion of the chain corresponds to 337-770 (TVTVCLTLTA…EEGRLIFDNL (434 aa)). The 4-aspartylphosphate intermediate role is filled by aspartate 374. Phosphoserine is present on residues serine 450 and serine 482. Lysine 485 lines the ATP pocket. Tyrosine 540 is modified (phosphotyrosine). Residues 594–715 (RAAVPDAVGK…QGAIVAVTGD (122 aa)) form a mediates interaction with SCN7A region. At lysine 659 the chain carries N6-succinyllysine. 2 positions are modified to phosphoserine: serine 666 and serine 673. The Mg(2+) site is built by aspartate 715 and aspartate 719. A helical membrane pass occupies residues 771-790 (KKSIAYTLTSNIPEITPFLI). Residues 791 to 800 (FIIANIPLPL) are Extracellular-facing. The helical transmembrane segment at 801 to 821 (GTVTILCIDLGTDMVPAISLA) threads the bilayer. At 822-841 (YEQAESDIMKRQPRNPKTDK) the chain is on the cytoplasmic side. A helical membrane pass occupies residues 842–864 (LVNERLISMAYGQIGMIQALGGF). Residues 865-916 (FTYFVILAENGFLPTHLLGLRVDWDDRWINDVEDSYGQQWTYEQRKIVEFTC) lie on the Extracellular side of the membrane. A helical transmembrane segment spans residues 917 to 936 (HTAFFVSIVVVQWADLVICK). At 937-949 (TRRNSVFQQGMKN) the chain is on the cytoplasmic side. Position 941 is a phosphoserine; by PKA (serine 941). The chain crosses the membrane as a helical span at residues 950–968 (KILIFGLFEETALAAFLSY). Residues 969-983 (CPGMGVALRMYPLKP) are Extracellular-facing. Residues 984–1004 (TWWFCAFPYSLLIFVYDEVRK) traverse the membrane as a helical segment. At 1005–1021 (LIIRRRPGGWVEKETYY) the chain is on the cytoplasmic side.

It belongs to the cation transport ATPase (P-type) (TC 3.A.3) family. Type IIC subfamily. As to quaternary structure, the sodium/potassium-transporting ATPase is composed of a catalytic alpha subunit, an auxiliary non-catalytic beta subunit and an additional regulatory subunit. Interacts with regulatory subunit FXYD1. Interacts with regulatory subunit FXYD3. Interacts with SIK1. Interacts with SLC35G1 and STIM1. Interacts with CLN3; this interaction regulates the sodium/potassium-transporting ATPase complex localization at the plasma membrane. Interacts with SCN7A; activates ATP1A1 P-type sodium:potassium-exchanging transporter activity which indirectly signals to nearby neurons to regulate sodium homeostasis. Post-translationally, phosphorylation on Tyr-10 modulates pumping activity. Phosphorylation of Ser-941 by PKA modulates the response of ATP1A1 to PKC. Dephosphorylation by protein phosphatase 2A (PP2A) following increases in intracellular sodium, leading to increase catalytic activity.

The protein resides in the cell membrane. Its subcellular location is the basolateral cell membrane. It is found in the sarcolemma. It localises to the cell projection. The protein localises to the axon. The protein resides in the melanosome. It catalyses the reaction K(+)(out) + Na(+)(in) + ATP + H2O = K(+)(in) + Na(+)(out) + ADP + phosphate + H(+). In terms of biological role, this is the catalytic component of the active enzyme, which catalyzes the hydrolysis of ATP coupled with the exchange of sodium and potassium ions across the plasma membrane. This action creates the electrochemical gradient of sodium and potassium ions, providing the energy for active transport of various nutrients. Could also be part of an osmosensory signaling pathway that senses body-fluid sodium levels and controls salt intake behavior as well as voluntary water intake to regulate sodium homeostasis. In Canis lupus familiaris (Dog), this protein is Sodium/potassium-transporting ATPase subunit alpha-1 (ATP1A1).